A 1020-amino-acid chain; its full sequence is DNA-directed RNA polymerase 2, chloroplastic/mitochondrial (1020 aa).

Residues 314–336 (KKQKAEKDKQKEDGEHVTQEQEK) are disordered. Catalysis depends on residues Asp721, Lys796, and Asp953.

It belongs to the phage and mitochondrial RNA polymerase family. The highest levels of expression are detected in the mature leaves. The level of expression is lowest in the cotyledons.

Its subcellular location is the plastid. It localises to the chloroplast. The protein resides in the mitochondrion. It carries out the reaction RNA(n) + a ribonucleoside 5'-triphosphate = RNA(n+1) + diphosphate. In terms of biological role, DNA-dependent RNA polymerase catalyzes the transcription of DNA into RNA using the four ribonucleoside triphosphates as substrates. This Nicotiana sylvestris (Wood tobacco) protein is DNA-directed RNA polymerase 2, chloroplastic/mitochondrial (RPOT2).